A 119-amino-acid chain; its full sequence is ILIGLVFTFVIYLPMAFVQSPLQLGILRFLLGFGAGALMPSVNSLLSKITPKEGVSRIFAYAQMCSNLGMVTGPLVGSAIAGYISYRAAIVGTSLFVIVNIIWSFINFRKYLRKRSIME.

4 consecutive transmembrane segments (helical) span residues 1-20, 22-42, 64-84, and 88-108; these read ILIG…FVQS, LQLG…MPSV, MCSN…AGYI, and AAIV…FINF.

This sequence belongs to the major facilitator superfamily.

The protein localises to the cell membrane. In Lactococcus lactis subsp. cremoris (Streptococcus cremoris), this protein is Multi-drug resistance efflux pump PmrA homolog (pmrA).